The primary structure comprises 70 residues: MNNQQKIKCPICGKQNTWRPDNQFRPFCSERCKLIDLGEWASESRKIPGSSIDPESIVTSNNKQDNVDEQ.

C9, C12, C28, and C32 together coordinate Zn(2+). The segment at 43–70 (ESRKIPGSSIDPESIVTSNNKQDNVDEQ) is disordered.

It belongs to the DNA gyrase inhibitor YacG family. In terms of assembly, interacts with GyrB. Zn(2+) serves as cofactor.

Functionally, inhibits all the catalytic activities of DNA gyrase by preventing its interaction with DNA. Acts by binding directly to the C-terminal domain of GyrB, which probably disrupts DNA binding by the gyrase. The protein is DNA gyrase inhibitor YacG of Legionella pneumophila (strain Lens).